A 270-amino-acid chain; its full sequence is Type III pantothenate kinase (270 aa).

19–26 (DIGNTSTT) is a binding site for ATP. Substrate is bound by residues Y109 and 116–119 (GADR). D118 serves as the catalytic Proton acceptor. D139 contributes to the K(+) binding site. An ATP-binding site is contributed by T142. T194 contributes to the substrate binding site.

The protein belongs to the type III pantothenate kinase family. In terms of assembly, homodimer. Requires NH4(+) as cofactor. K(+) is required as a cofactor.

It is found in the cytoplasm. The enzyme catalyses (R)-pantothenate + ATP = (R)-4'-phosphopantothenate + ADP + H(+). It participates in cofactor biosynthesis; coenzyme A biosynthesis; CoA from (R)-pantothenate: step 1/5. Functionally, catalyzes the phosphorylation of pantothenate (Pan), the first step in CoA biosynthesis. This Chlorobaculum tepidum (strain ATCC 49652 / DSM 12025 / NBRC 103806 / TLS) (Chlorobium tepidum) protein is Type III pantothenate kinase.